Reading from the N-terminus, the 218-residue chain is 7-cyano-7-deazaguanine synthase (218 aa).

Residue 9–19 (YSGGMDSFTVL) coordinates ATP. Zn(2+) is bound by residues C185, C193, C196, and C199.

The protein belongs to the QueC family. Zn(2+) is required as a cofactor.

It catalyses the reaction 7-carboxy-7-deazaguanine + NH4(+) + ATP = 7-cyano-7-deazaguanine + ADP + phosphate + H2O + H(+). It participates in purine metabolism; 7-cyano-7-deazaguanine biosynthesis. Catalyzes the ATP-dependent conversion of 7-carboxy-7-deazaguanine (CDG) to 7-cyano-7-deazaguanine (preQ(0)). In Alteromonas mediterranea (strain DSM 17117 / CIP 110805 / LMG 28347 / Deep ecotype), this protein is 7-cyano-7-deazaguanine synthase.